A 289-amino-acid chain; its full sequence is MSDSKSSASTSEDRLYGSAPSHDVPKRKTRTHHLQAMKAEGERWAMLTAYDYSSARIFEEAGIPVLLVGDSAANVVYGYETTVPVTIDELLPLVRGVVRGAPHALVVADLPFGSYESSPEQALASATRFMKEGLAHAVKLEGGERVAPQIAAITAAGIPVMAHVGFTPQSVNSLGGFRVQGRGDAAEQLVADAIAVQEAGAFSVVMEMVPAEIAGQVTRKLTIPTVGIGAGVECDAQVLVWQDMAGYTSGKTAKFVKRFGNVGDELRSAAAAYATEVRAGTFPAEEHSF.

Residues 1–10 are compositionally biased toward low complexity; sequence MSDSKSSAST. Positions 1–33 are disordered; the sequence is MSDSKSSASTSEDRLYGSAPSHDVPKRKTRTHH. Positions 70 and 109 each coordinate Mg(2+). Residues 70–71, Asp109, and Lys139 contribute to the 3-methyl-2-oxobutanoate site; that span reads DS. Glu141 is a binding site for Mg(2+). The active-site Proton acceptor is the Glu207.

It belongs to the PanB family. As to quaternary structure, homodecamer; pentamer of dimers. Mg(2+) is required as a cofactor.

The protein localises to the cytoplasm. It catalyses the reaction 3-methyl-2-oxobutanoate + (6R)-5,10-methylene-5,6,7,8-tetrahydrofolate + H2O = 2-dehydropantoate + (6S)-5,6,7,8-tetrahydrofolate. It participates in cofactor biosynthesis; (R)-pantothenate biosynthesis; (R)-pantoate from 3-methyl-2-oxobutanoate: step 1/2. Catalyzes the reversible reaction in which hydroxymethyl group from 5,10-methylenetetrahydrofolate is transferred onto alpha-ketoisovalerate to form ketopantoate. This is 3-methyl-2-oxobutanoate hydroxymethyltransferase from Rhodococcus jostii (strain RHA1).